A 64-amino-acid polypeptide reads, in one-letter code: Large ribosomal subunit protein bL32 (64 aa).

Belongs to the bacterial ribosomal protein bL32 family.

This is Large ribosomal subunit protein bL32 from Mycoplasma mobile (strain ATCC 43663 / 163K / NCTC 11711) (Mesomycoplasma mobile).